We begin with the raw amino-acid sequence, 669 residues long: Threonine--tRNA ligase (669 aa).

The 58-residue stretch at 3–60 (DAQQITLIVDGEETKVTEGTTGAELFFERRDVVVARVNGVLKDLDQVLTEGADVEGVT) folds into the TGS domain. The tract at residues 260–566 (DHRKLGVELD…LTEHYAGAFP (307 aa)) is catalytic. Cys-365, His-416, and His-543 together coordinate Zn(2+).

This sequence belongs to the class-II aminoacyl-tRNA synthetase family. As to quaternary structure, homodimer. Requires Zn(2+) as cofactor.

The protein resides in the cytoplasm. It carries out the reaction tRNA(Thr) + L-threonine + ATP = L-threonyl-tRNA(Thr) + AMP + diphosphate + H(+). Functionally, catalyzes the attachment of threonine to tRNA(Thr) in a two-step reaction: L-threonine is first activated by ATP to form Thr-AMP and then transferred to the acceptor end of tRNA(Thr). Also edits incorrectly charged L-seryl-tRNA(Thr). The polypeptide is Threonine--tRNA ligase (Paenarthrobacter aurescens (strain TC1)).